We begin with the raw amino-acid sequence, 1001 residues long: UPF0182 protein Mjls_1469 (1001 aa).

7 helical membrane passes run 16–36, 61–81, 112–132, 174–194, 209–229, 258–278, and 286–306; these read VLIG…RFID, VVVF…GLAL, LFGF…AQSY, FVAT…FGGI, IQLV…YWLD, KLIL…AIVL, and IGVV…PLVV. The span at 900-929 shows a compositional bias: low complexity; it reads ATGPAPANLPDGQPAAQPPNGQQPAAQTPG. The tract at residues 900–977 is disordered; sequence ATGPAPANLP…MSGLQDAQRS (78 aa).

This sequence belongs to the UPF0182 family.

Its subcellular location is the cell membrane. This Mycobacterium sp. (strain JLS) protein is UPF0182 protein Mjls_1469.